The primary structure comprises 66 residues: Large ribosomal subunit protein bL33c (66 aa).

Belongs to the bacterial ribosomal protein bL33 family.

The protein localises to the plastid. It localises to the chloroplast. In Solanum bulbocastanum (Wild potato), this protein is Large ribosomal subunit protein bL33c.